The primary structure comprises 420 residues: Serine hydroxymethyltransferase (420 aa).

Residues Leu-121 and 125 to 127 (GHL) contribute to the (6S)-5,6,7,8-tetrahydrofolate site. Lys-230 carries the N6-(pyridoxal phosphate)lysine modification. 355–357 (SPF) is a binding site for (6S)-5,6,7,8-tetrahydrofolate.

The protein belongs to the SHMT family. As to quaternary structure, homodimer. Pyridoxal 5'-phosphate is required as a cofactor.

It is found in the cytoplasm. The catalysed reaction is (6R)-5,10-methylene-5,6,7,8-tetrahydrofolate + glycine + H2O = (6S)-5,6,7,8-tetrahydrofolate + L-serine. The protein operates within one-carbon metabolism; tetrahydrofolate interconversion. It participates in amino-acid biosynthesis; glycine biosynthesis; glycine from L-serine: step 1/1. Its function is as follows. Catalyzes the reversible interconversion of serine and glycine with tetrahydrofolate (THF) serving as the one-carbon carrier. This reaction serves as the major source of one-carbon groups required for the biosynthesis of purines, thymidylate, methionine, and other important biomolecules. Also exhibits THF-independent aldolase activity toward beta-hydroxyamino acids, producing glycine and aldehydes, via a retro-aldol mechanism. The sequence is that of Serine hydroxymethyltransferase from Streptococcus gordonii (strain Challis / ATCC 35105 / BCRC 15272 / CH1 / DL1 / V288).